We begin with the raw amino-acid sequence, 900 residues long: MENQESDEPMQKKPHLLDSVSPNSMARNSSPSHPIAKSVSFFDCDFSLLCLRLVDYEIDVDATVLQLQNQKLVQQLDLQKKQLYDVESKIQELQLNQTSYDDELISVNQLWNQLVDDLILLGVRAGANQEALNYLDIVDKKRVPPCAADETFLCRLLQVDSLDTSKSDEVVRKVEEALALRHSSTMELMGLFENTIDTQKTKAESISQSLHAVKSTEDATIQLSSINDLMKEESKNLREMIDALHVRHKEHSEQIQAYISSHSTDQSELKHLKGQLEEIKAELEENRRKLITLKMQKDAACEGHVTSPAIANGSLSPEKPVDKTKLRELKDSIDEIKIMAEGRLSELQASQEYNLSLSRQCQDIENELKDDQYIYSSRLYSLINDRIHHWNAELDRYKILTEAIQAERSFVMRRDKELNLRAESLEAANHKTTTVGSRIEVLEKKLQSCIIEKNGLELETEEAIQDSERQDIKSEFIAMASTLSKEMEMMEAQLKRWKDTAQDALYLREQAQSLRVSLSNKADEQKGLEDKCAKQMAEIKSLKALIEKLLKEKLQLQNLASICTRECNDDRGLAEIKDSQRKAQAQAEELKNVLDEHFLELRVKAAHETESACQERLATAKAEIAELRTQLDLSEREVLELKEGIKVKEQEAEASIAEMETIGQAYEDMQTQNQHLLQQVAERDDYNIKLVSESVKTKHAYNTHLSEKQVMEKQLHQVNASVENFKARIAHNEEQMKGCFSEAYKLIQEDRHLVISLETTKWEVADADKEFRWLKSAVSSSEKEYEQISRRTDDIKLELDDERREKKKLEEELMELNKELEELGSESVEAAIVRLQEEVKNCKNILKCGVCFDRPKEVVIVKCYHLFCQQCIQRSLEIRHRKCPGCGTAFGQNDVRLVKM.

The interval 1–31 (MENQESDEPMQKKPHLLDSVSPNSMARNSSP) is disordered. The segment covering 20-31 (VSPNSMARNSSP) has biased composition (polar residues). Coiled coils occupy residues 63 to 96 (TVLQ…LQLN), 217 to 300 (EDAT…KDAA), 437 to 660 (SRIE…AEME), and 706 to 737 (SEKQ…EQMK). The RING-type zinc finger occupies 848 to 887 (CGVCFDRPKEVVIVKCYHLFCQQCIQRSLEIRHRKCPGCG).

It belongs to the BRE1 family. May act as a tetramer consisting of two copies of HUB1 and two copies of HUB2. As to expression, ubiquitously expressed.

It is found in the nucleus. The enzyme catalyses S-ubiquitinyl-[E2 ubiquitin-conjugating enzyme]-L-cysteine + [acceptor protein]-L-lysine = [E2 ubiquitin-conjugating enzyme]-L-cysteine + N(6)-ubiquitinyl-[acceptor protein]-L-lysine.. It functions in the pathway protein modification; protein ubiquitination. E3 ubiquitin-protein ligase that monoubiquitinates H2B to form H2BK143ub1. H2BK143ub1 gives a specific tag for epigenetic transcriptional activation and is also prerequisite for H3K4me and maybe H3K79me. It thereby plays a central role in histone code and gene regulation. Forms a ubiquitin ligase complex in cooperation with the E2 enzyme UBC2/RAD6. This is E3 ubiquitin-protein ligase BRE1-like 2 (HUB2) from Arabidopsis thaliana (Mouse-ear cress).